Reading from the N-terminus, the 178-residue chain is Large ribosomal subunit protein uL10 (178 aa).

Belongs to the universal ribosomal protein uL10 family. Part of the ribosomal stalk of the 50S ribosomal subunit. The N-terminus interacts with L11 and the large rRNA to form the base of the stalk. The C-terminus forms an elongated spine to which L12 dimers bind in a sequential fashion forming a multimeric L10(L12)X complex.

In terms of biological role, forms part of the ribosomal stalk, playing a central role in the interaction of the ribosome with GTP-bound translation factors. In Albidiferax ferrireducens (strain ATCC BAA-621 / DSM 15236 / T118) (Rhodoferax ferrireducens), this protein is Large ribosomal subunit protein uL10.